Here is a 361-residue protein sequence, read N- to C-terminus: RNA 3'-terminal phosphate cyclase (361 aa).

Residues Q109 and 293 to 297 each bind ATP; that span reads HLADQ. H319 serves as the catalytic Tele-AMP-histidine intermediate.

It belongs to the RNA 3'-terminal cyclase family. Type 1 subfamily.

The protein localises to the cytoplasm. It catalyses the reaction a 3'-end 3'-phospho-ribonucleotide-RNA + ATP = a 3'-end 2',3'-cyclophospho-ribonucleotide-RNA + AMP + diphosphate. Functionally, catalyzes the conversion of 3'-phosphate to a 2',3'-cyclic phosphodiester at the end of RNA. The mechanism of action of the enzyme occurs in 3 steps: (A) adenylation of the enzyme by ATP; (B) transfer of adenylate to an RNA-N3'P to produce RNA-N3'PP5'A; (C) and attack of the adjacent 2'-hydroxyl on the 3'-phosphorus in the diester linkage to produce the cyclic end product. The biological role of this enzyme is unknown but it is likely to function in some aspects of cellular RNA processing. The chain is RNA 3'-terminal phosphate cyclase from Methylococcus capsulatus (strain ATCC 33009 / NCIMB 11132 / Bath).